Consider the following 156-residue polypeptide: Transcriptional repressor NrdR (156 aa).

Residues 3–34 (CPKCNSTQSKVVDSRHADELNAIRRRRECENC) fold into a zinc finger. In terms of domain architecture, ATP-cone spans 49–139 (LIVVKKDGTR…VYKEFKDVDQ (91 aa)).

The protein belongs to the NrdR family. Zn(2+) is required as a cofactor.

Its function is as follows. Negatively regulates transcription of bacterial ribonucleotide reductase nrd genes and operons by binding to NrdR-boxes. The sequence is that of Transcriptional repressor NrdR from Staphylococcus aureus (strain NCTC 8325 / PS 47).